Here is a 93-residue protein sequence, read N- to C-terminus: Molybdopterin synthase sulfur carrier subunit (93 aa).

The residue at position 93 (G93) is a 1-thioglycine; alternate. G93 carries the post-translational modification Glycyl adenylate; alternate.

The protein belongs to the MoaD family. MOCS2A subfamily. In terms of assembly, heterotetramer; composed of 2 small (MOCS2A) and 2 large (MOCS2B) subunits. In terms of processing, C-terminal thiocarboxylation occurs in 2 steps, it is first acyl-adenylated (-COAMP) via the hesA/moeB/thiF part of UBA4, then thiocarboxylated (-COSH) via the rhodanese domain of UBA4.

The protein resides in the cytoplasm. It participates in cofactor biosynthesis; molybdopterin biosynthesis. Functionally, acts as a sulfur carrier required for molybdopterin biosynthesis. Component of the molybdopterin synthase complex that catalyzes the conversion of precursor Z into molybdopterin by mediating the incorporation of 2 sulfur atoms into precursor Z to generate a dithiolene group. In the complex, serves as sulfur donor by being thiocarboxylated (-COSH) at its C-terminus by UBA4. After interaction with MOCS2B, the sulfur is then transferred to precursor Z to form molybdopterin. This Mycosarcoma maydis (Corn smut fungus) protein is Molybdopterin synthase sulfur carrier subunit.